Consider the following 252-residue polypeptide: 2-succinyl-6-hydroxy-2,4-cyclohexadiene-1-carboxylate synthase (252 aa).

It belongs to the AB hydrolase superfamily. MenH family. As to quaternary structure, monomer.

It carries out the reaction 5-enolpyruvoyl-6-hydroxy-2-succinyl-cyclohex-3-ene-1-carboxylate = (1R,6R)-6-hydroxy-2-succinyl-cyclohexa-2,4-diene-1-carboxylate + pyruvate. It functions in the pathway quinol/quinone metabolism; 1,4-dihydroxy-2-naphthoate biosynthesis; 1,4-dihydroxy-2-naphthoate from chorismate: step 3/7. Its pathway is quinol/quinone metabolism; menaquinone biosynthesis. Its function is as follows. Catalyzes a proton abstraction reaction that results in 2,5-elimination of pyruvate from 2-succinyl-5-enolpyruvyl-6-hydroxy-3-cyclohexene-1-carboxylate (SEPHCHC) and the formation of 2-succinyl-6-hydroxy-2,4-cyclohexadiene-1-carboxylate (SHCHC). The sequence is that of 2-succinyl-6-hydroxy-2,4-cyclohexadiene-1-carboxylate synthase from Salmonella typhimurium (strain LT2 / SGSC1412 / ATCC 700720).